The chain runs to 518 residues: Serine--tRNA ligase, mitochondrial (518 aa).

Residues 1-34 (MAASMARLWWPFLARQGLRSRGRCVCSQNPRRSF) constitute a mitochondrion transit peptide. Residue Lys110 is modified to N6-acetyllysine. The residue at position 195 (Lys195) is an N6-succinyllysine. 299–301 (TAE) contributes to the L-serine binding site. Residue 330–332 (RAE) coordinates ATP. The residue at position 337 (Lys337) is an N6-succinyllysine. Val345 provides a ligand contact to ATP. Glu352 contributes to the L-serine binding site. An ATP-binding site is contributed by 418–421 (EVTS). Residue Thr453 participates in L-serine binding. The disordered stretch occupies residues 497–518 (PLQYIGPNQPQKPRLPGQSATR).

The protein belongs to the class-II aminoacyl-tRNA synthetase family. Type-1 seryl-tRNA synthetase subfamily. In terms of assembly, homodimer. The tRNA molecule probably binds across the dimer. Ubiquitous.

It is found in the mitochondrion matrix. The enzyme catalyses tRNA(Ser) + L-serine + ATP = L-seryl-tRNA(Ser) + AMP + diphosphate + H(+). It catalyses the reaction tRNA(Sec) + L-serine + ATP = L-seryl-tRNA(Sec) + AMP + diphosphate + H(+). The protein operates within aminoacyl-tRNA biosynthesis; selenocysteinyl-tRNA(Sec) biosynthesis; L-seryl-tRNA(Sec) from L-serine and tRNA(Sec): step 1/1. Catalyzes the attachment of serine to tRNA(Ser). Is also probably able to aminoacylate tRNA(Sec) with serine, to form the misacylated tRNA L-seryl-tRNA(Sec), which will be further converted into selenocysteinyl-tRNA(Sec). The polypeptide is Serine--tRNA ligase, mitochondrial (Sars2) (Mus musculus (Mouse)).